The following is a 462-amino-acid chain: WD repeat-containing protein WRAP73 (462 aa).

WD repeat units follow at residues 46–86 (TCLD…WHCK), 89–129 (EGSA…VSYI), 176–210 (TDTQ…YSLD), and 221–260 (EWSL…MITE). Phosphoserine is present on Ser281. 2 WD repeats span residues 328-369 (NPRM…LFVV) and 371-410 (EHMS…SVQV).

Interacts with SSX2IP. As to expression, ubiquitous.

The protein localises to the cytoplasm. The protein resides in the cytoskeleton. It localises to the microtubule organizing center. Its subcellular location is the centrosome. The SSX2IP:WRAP73 complex is proposed to act as regulator of spindle anchoring at the mitotic centrosome. Required for the centrosomal localization of SSX2IP and normal mitotic bipolar spindle morphology. Required for the targeting of centriole satellite proteins to centrosomes such as of PCM1, SSX2IP, CEP290 and PIBF1/CEP90. Required for ciliogenesis and involved in the removal of the CEP97:CCP110 complex from the mother centriole. Involved in ciliary vesicle formation at the mother centriole and required for the docking of vesicles to the basal body during ciliogenesis; may promote docking of RAB8A- and ARL13B-containing vesicles. The protein is WD repeat-containing protein WRAP73 (Wrap73) of Mus musculus (Mouse).